The following is a 248-amino-acid chain: Probable capsular polysaccharide biosynthesis protein YwqC (248 aa).

2 helical membrane passes run 18-38 (ILLIMIVTAAATAAGGLISFF) and 174-194 (LLNIAIAFAAGLAGSIGLAFL).

It belongs to the CpsC/CapA family. In terms of processing, not phosphorylated in vitro by YwqD.

Its subcellular location is the cell membrane. The protein operates within capsule biogenesis; capsule polysaccharide biosynthesis. Required for YwqD kinase activity. May bring YwqD and its substrates into contact. Probably involved in the regulation of capsular polysaccharide biosynthesis. The polypeptide is Probable capsular polysaccharide biosynthesis protein YwqC (ywqC) (Bacillus subtilis (strain 168)).